A 590-amino-acid chain; its full sequence is MDQPEDTDALVRFENITYSYPYSDSRVLSDVNLKLEKGEFVLLAGPSGCGKSTLVRCFNRLVPEISGGKLSGRVIIRGKDLREEKVHKLALEVGMVFQNPETQLFSLKVEDDLAFGPENLGLPGKEILSRVEKSLKAIKLEKLKDHFIFTLSGGEKQRTAIGGNLAMEPEILVLDEPTSDLDPSGTREVLDLLRRLNAEKRITLILIEHKLDEVFELADRMLVMDEGKVILDGKPFDILCREEGKLKKLGIHPPQIIEISRLLGFNCRTSSPPYENILKRLAELLMPSTRELQPESRKEAKPKIPPALCPEESLSHVRIEKLSCRREDGSETLKNVNLDIKYGEFLALLGHNGAGKTTLAGHLMRFHKPSSGRILLNGKNISKYSTAQLSQQIGYLFQNPDSQIFMNSVFEEVRFGLKNLKIPEEEMKKRVNSALEMMELSVYRNRHPQALSRGQRQRLAVASILALEPDLLVLDEPTTGQDRGHIHKFLDKIRELNRLGKTVILISHDMELVAEYAERVIVMKQGEVLLDGPAAEVFLSPEELDAAGLIPPLPARLALDLRKQGFDVPGMLTVSELKSFLRAHNVEIRD.

2 ABC transporter domains span residues 11–251 (VRFE…KLGI) and 317–550 (VRIE…AGLI). Residues 45–52 (GPSGCGKS) and 350–357 (GHNGAGKT) each bind ATP.

This sequence belongs to the ABC transporter superfamily.

The protein localises to the cell membrane. Probably part of an ABC transporter complex. Responsible for energy coupling to the transport system. The chain is Putative ABC transporter ATP-binding protein MM_3016 from Methanosarcina mazei (strain ATCC BAA-159 / DSM 3647 / Goe1 / Go1 / JCM 11833 / OCM 88) (Methanosarcina frisia).